A 396-amino-acid polypeptide reads, in one-letter code: MEFDVVVVGAGPAGSVAAWAAAEAGCDVLILERKAEIGVPKQCAEGISAHGLEHAGIEPQDEWIATEISRALIYAPNGKEFEVPGDGYVLERRVFDKWLVVRAVEAGAEVELLAHARRALLDEGRVVGVEYEGEDGVHEVRARIVIAADGIESRIGRTAGLVPSLKPVEMCTCAQYEMVGVDVEEDATHFFVDAEFFPGGYFWIFPKGEGRANVGLGIRGSESEPGDALKVLNRALEDHELISEAVADAVPVEVNVGGVPVCGPVERTYGDGILLVGDAARQVNPLTGGGLHTSLVCGRIAGEVAAEAIEEDDTSASFLKRYQDRWEEEFGKTFKYALKASKIFSEMSNEELNALAEALDREDILRLVKGEEVVKVAKKVISRKPSLLKYAKHLMK.

Residues alanine 13, glutamate 32, cysteine 43, alanine 44, glycine 46, arginine 92, alanine 116, aspartate 278, glycine 290, and leucine 291 each coordinate FAD.

This sequence belongs to the geranylgeranyl reductase family. DGGGPL reductase subfamily. FAD is required as a cofactor.

It catalyses the reaction a 2,3-bis-O-phytanyl-sn-glycerol 1-phospholipid + 8 A = a 2,3-bis-O-(geranylgeranyl)-sn-glycerol 1-phospholipid + 8 AH2. It carries out the reaction 2,3-bis-O-(phytanyl)-sn-glycerol 1-phosphate + 8 A = 2,3-bis-O-(geranylgeranyl)-sn-glycerol 1-phosphate + 8 AH2. The catalysed reaction is CDP-2,3-bis-O-(geranylgeranyl)-sn-glycerol + 8 AH2 = CDP-2,3-bis-O-(phytanyl)-sn-glycerol + 8 A. The enzyme catalyses archaetidylserine + 8 AH2 = 2,3-bis-O-phytanyl-sn-glycero-3-phospho-L-serine + 8 A. It functions in the pathway membrane lipid metabolism; glycerophospholipid metabolism. Its function is as follows. Is involved in the reduction of 2,3-digeranylgeranylglycerophospholipids (unsaturated archaeols) into 2,3-diphytanylglycerophospholipids (saturated archaeols) in the biosynthesis of archaeal membrane lipids. Catalyzes the formation of archaetidic acid (2,3-di-O-phytanyl-sn-glyceryl phosphate) from 2,3-di-O-geranylgeranylglyceryl phosphate (DGGGP) via the hydrogenation of each double bond of the isoprenoid chains. Is also probably able to reduce double bonds of geranyl groups in CDP-2,3-bis-O-(geranylgeranyl)-sn-glycerol and archaetidylserine, thus acting at various stages in the biosynthesis of archaeal membrane lipids. This Methanopyrus kandleri (strain AV19 / DSM 6324 / JCM 9639 / NBRC 100938) protein is Digeranylgeranylglycerophospholipid reductase 2.